Here is a 139-residue protein sequence, read N- to C-terminus: Ribosome-binding factor A (139 aa).

The protein belongs to the RbfA family. As to quaternary structure, monomer. Binds 30S ribosomal subunits, but not 50S ribosomal subunits or 70S ribosomes.

The protein localises to the cytoplasm. Its function is as follows. One of several proteins that assist in the late maturation steps of the functional core of the 30S ribosomal subunit. Associates with free 30S ribosomal subunits (but not with 30S subunits that are part of 70S ribosomes or polysomes). Required for efficient processing of 16S rRNA. May interact with the 5'-terminal helix region of 16S rRNA. The protein is Ribosome-binding factor A of Methylobacterium sp. (strain 4-46).